Here is a 424-residue protein sequence, read N- to C-terminus: UPF0415 protein C7orf25 homolog (424 aa).

This sequence belongs to the UPF0415 family.

The polypeptide is UPF0415 protein C7orf25 homolog (Xenopus tropicalis (Western clawed frog)).